Here is a 337-residue protein sequence, read N- to C-terminus: Adenine deaminase (337 aa).

Residues H17, H19, and H197 each contribute to the Zn(2+) site. E200 acts as the Proton donor in catalysis. Residue D278 coordinates Zn(2+). D279 is a substrate binding site.

It belongs to the metallo-dependent hydrolases superfamily. Adenosine and AMP deaminases family. Adenine deaminase type 2 subfamily. Zn(2+) is required as a cofactor.

It catalyses the reaction adenine + H2O + H(+) = hypoxanthine + NH4(+). Catalyzes the hydrolytic deamination of adenine to hypoxanthine. Plays an important role in the purine salvage pathway and in nitrogen catabolism. This chain is Adenine deaminase, found in Zymomonas mobilis subsp. mobilis (strain ATCC 31821 / ZM4 / CP4).